The chain runs to 131 residues: D-ribose pyranase (131 aa).

Histidine 20 functions as the Proton donor in the catalytic mechanism. Substrate is bound by residues aspartate 28, histidine 98, and 120-122 (YAN).

Belongs to the RbsD / FucU family. RbsD subfamily. As to quaternary structure, homodecamer.

It localises to the cytoplasm. The enzyme catalyses beta-D-ribopyranose = beta-D-ribofuranose. The protein operates within carbohydrate metabolism; D-ribose degradation; D-ribose 5-phosphate from beta-D-ribopyranose: step 1/2. Catalyzes the interconversion of beta-pyran and beta-furan forms of D-ribose. The sequence is that of D-ribose pyranase from Bacillus licheniformis (strain ATCC 14580 / DSM 13 / JCM 2505 / CCUG 7422 / NBRC 12200 / NCIMB 9375 / NCTC 10341 / NRRL NRS-1264 / Gibson 46).